A 567-amino-acid polypeptide reads, in one-letter code: MSDPTRPARIDERSRNVTEGVMRAPNRSMYYAMGYRETDFGKPMVGVASAHSTITPCNSGLQPLADTVAAALKEAGANPQLFGTPTVSDGIGMGTEGMKYSLVSREVIADSIETCVNGLWQDGVVVIGGCDKNMPGGMMALVRTNVPGIYVYGGTIKPGHYKGRDLNIVSVFEAVGEFIAGQLDPVDFKEIEKRACPGSGSCGGMYTANTMSAAFEALGMSLPYSSTMANEDAEKLASAAESARVLVEAIKRGLRPRDIVTREAIENAVSVIMATGGSTNAVLHFLAIAHAAEVPWTIDDFERIRRRVPVIVDMKPSGRYLATDLHQAGGIPQVMKLLLDAGLLHGACVTITGQTIAEVLENVPAAPRADQGVIRTLSDPLYAEGHLAILRGNLSPEGCVAKISGLKNPAITGPARVFDSEDDAMAAIMARRIVEGDVVVIRYEGPKGGPGMREMLAPTSALVGQGLGESVGLITDGRFSGGTWGMVVGHVSPEAFVGGPIALVREGDSVTIDAHRQLVQLNVGDEELARRAADWTPPSPRYTRGVLAKFAKFASSASKGAVTDLDL.

Cys57 contacts [2Fe-2S] cluster. Position 89 (Asp89) interacts with Mg(2+). Cys130 contacts [2Fe-2S] cluster. Mg(2+) contacts are provided by Asp131 and Lys132. Lys132 is modified (N6-carboxylysine). Cys202 lines the [2Fe-2S] cluster pocket. Mg(2+) is bound at residue Glu454. Catalysis depends on Ser480, which acts as the Proton acceptor.

This sequence belongs to the IlvD/Edd family. As to quaternary structure, homodimer. [2Fe-2S] cluster is required as a cofactor. Requires Mg(2+) as cofactor.

It catalyses the reaction (2R)-2,3-dihydroxy-3-methylbutanoate = 3-methyl-2-oxobutanoate + H2O. The catalysed reaction is (2R,3R)-2,3-dihydroxy-3-methylpentanoate = (S)-3-methyl-2-oxopentanoate + H2O. It participates in amino-acid biosynthesis; L-isoleucine biosynthesis; L-isoleucine from 2-oxobutanoate: step 3/4. It functions in the pathway amino-acid biosynthesis; L-valine biosynthesis; L-valine from pyruvate: step 3/4. Functions in the biosynthesis of branched-chain amino acids. Catalyzes the dehydration of (2R,3R)-2,3-dihydroxy-3-methylpentanoate (2,3-dihydroxy-3-methylvalerate) into 2-oxo-3-methylpentanoate (2-oxo-3-methylvalerate) and of (2R)-2,3-dihydroxy-3-methylbutanoate (2,3-dihydroxyisovalerate) into 2-oxo-3-methylbutanoate (2-oxoisovalerate), the penultimate precursor to L-isoleucine and L-valine, respectively. The sequence is that of Dihydroxy-acid dehydratase 1 from Aromatoleum aromaticum (strain DSM 19018 / LMG 30748 / EbN1) (Azoarcus sp. (strain EbN1)).